A 270-amino-acid chain; its full sequence is DNA repair protein RecO (270 aa).

The protein belongs to the RecO family.

In terms of biological role, involved in DNA repair and RecF pathway recombination. The polypeptide is DNA repair protein RecO (Synechococcus sp. (strain WH7803)).